The primary structure comprises 360 residues: MLYHLAMALEGVYSGFNVFQYLTFRTILGVLTALGIALLVGPAVIQRLVEHQIGQQVRDDGPQSHLSKAGTPTMGGALILVAIAVATLLWSDLTNRYVWVVLLTTLAFGVIGGVDDYRKLALGNSKGLSARAKFFWQTVVALMAAVFLFSTAQSPLETSLIVPLFKDVVLPLGLLFIPLVWLVVVGSSNAVNLTDGLDGLAILPSVLVAGGLAVFAYATGHAVFADYLGIPFVAGAGEVVVFCGALIGAGLGFLWFNTYPAQVFMGDVGALALGAALGILAVVVRQELVLLIMGGVFVVETLSVMLQVASYKLTGRRIFRMAPLHHHFELKGWPEPRVIVRFWIITVVLVLVGLAMLKVR.

10 consecutive transmembrane segments (helical) span residues 26–46 (TILGVLTALGIALLVGPAVIQ), 70–90 (GTPTMGGALILVAIAVATLLW), 97–117 (YVWVVLLTTLAFGVIGGVDDY), 132–152 (AKFFWQTVVALMAAVFLFSTA), 168–188 (VVLPLGLLFIPLVWLVVVGSS), 199–219 (GLAILPSVLVAGGLAVFAYAT), 236–256 (AGEVVVFCGALIGAGLGFLWF), 263–283 (VFMGDVGALALGAALGILAVV), 288–308 (LVLLIMGGVFVVETLSVMLQV), and 338–358 (VIVRFWIITVVLVLVGLAMLK).

This sequence belongs to the glycosyltransferase 4 family. MraY subfamily. Mg(2+) is required as a cofactor.

It is found in the cell inner membrane. It carries out the reaction UDP-N-acetyl-alpha-D-muramoyl-L-alanyl-gamma-D-glutamyl-meso-2,6-diaminopimeloyl-D-alanyl-D-alanine + di-trans,octa-cis-undecaprenyl phosphate = di-trans,octa-cis-undecaprenyl diphospho-N-acetyl-alpha-D-muramoyl-L-alanyl-D-glutamyl-meso-2,6-diaminopimeloyl-D-alanyl-D-alanine + UMP. The protein operates within cell wall biogenesis; peptidoglycan biosynthesis. Its function is as follows. Catalyzes the initial step of the lipid cycle reactions in the biosynthesis of the cell wall peptidoglycan: transfers peptidoglycan precursor phospho-MurNAc-pentapeptide from UDP-MurNAc-pentapeptide onto the lipid carrier undecaprenyl phosphate, yielding undecaprenyl-pyrophosphoryl-MurNAc-pentapeptide, known as lipid I. The polypeptide is Phospho-N-acetylmuramoyl-pentapeptide-transferase (Alkalilimnicola ehrlichii (strain ATCC BAA-1101 / DSM 17681 / MLHE-1)).